The following is a 214-amino-acid chain: MRGKFIVIEGIDGCGKTTQIDEISKWIPTSGLLRGKQKLVKTREPGGSLLGKKIRNLILDNHKDNKPSSLAELLLYSADRAEHISKTISPALENQDWVLSDRFCDSTLAYQGYGRNINLEIIKNIESIVCQGESPDLTIFLEISAEESVLRREKFIPDRMESEGIKFLEKVNEGFKLIAKEKNWTTISALQDINTITNEIKETLLKKFSRVNND.

Position 10-17 (10-17) interacts with ATP; the sequence is GIDGCGKT.

This sequence belongs to the thymidylate kinase family.

The enzyme catalyses dTMP + ATP = dTDP + ADP. Phosphorylation of dTMP to form dTDP in both de novo and salvage pathways of dTTP synthesis. The sequence is that of Thymidylate kinase from Prochlorococcus marinus subsp. pastoris (strain CCMP1986 / NIES-2087 / MED4).